The following is a 336-amino-acid chain: Ferrochelatase (336 aa).

Fe cation contacts are provided by His-206 and Glu-287.

Belongs to the ferrochelatase family.

Its subcellular location is the cytoplasm. The enzyme catalyses heme b + 2 H(+) = protoporphyrin IX + Fe(2+). It participates in porphyrin-containing compound metabolism; protoheme biosynthesis; protoheme from protoporphyrin-IX: step 1/1. Its function is as follows. Catalyzes the ferrous insertion into protoporphyrin IX. The polypeptide is Ferrochelatase (Neisseria meningitidis serogroup A / serotype 4A (strain DSM 15465 / Z2491)).